The sequence spans 547 residues: NADH-ubiquinone oxidoreductase chain 5 (547 aa).

Transmembrane regions (helical) follow at residues 3-23 (ISIF…IFFV), 45-65 (YFNS…VLVF), 80-100 (YFML…SGCF), 101-121 (SMLV…LFYN), 132-152 (TVLT…STIF), 198-218 (ISSL…IMNF), 227-247 (VIMI…MAAL), 264-284 (MGFS…IHLL), 319-339 (VPYF…GLVF), 352-372 (FFFS…SVFL), 399-419 (VVMN…IWWM), 430-450 (FLYV…VVGF), 460-477 (FVYK…VYGL), 485-505 (LFLG…GFWS), and 512-532 (LYFN…WGCI).

The protein belongs to the complex I subunit 5 family.

It is found in the mitochondrion inner membrane. It carries out the reaction a ubiquinone + NADH + 5 H(+)(in) = a ubiquinol + NAD(+) + 4 H(+)(out). In terms of biological role, core subunit of the mitochondrial membrane respiratory chain NADH dehydrogenase (Complex I) that is believed to belong to the minimal assembly required for catalysis. Complex I functions in the transfer of electrons from NADH to the respiratory chain. The immediate electron acceptor for the enzyme is believed to be ubiquinone. In Ascaris suum (Pig roundworm), this protein is NADH-ubiquinone oxidoreductase chain 5 (ND5).